The following is a 457-amino-acid chain: UDP-N-acetylglucosamine 1-carboxyvinyltransferase (457 aa).

34 to 35 (KN) contacts phosphoenolpyruvate. Residue Arg-104 coordinates UDP-N-acetyl-alpha-D-glucosamine. Cys-128 acts as the Proton donor in catalysis. Cys-128 bears the 2-(S-cysteinyl)pyruvic acid O-phosphothioketal mark. Positions 319 and 341 each coordinate UDP-N-acetyl-alpha-D-glucosamine. Residues 436–457 (INKSKNRSSNSKLKEVSEIRAA) are disordered. A compositionally biased stretch (basic and acidic residues) spans 447–457 (KLKEVSEIRAA).

The protein belongs to the EPSP synthase family. MurA subfamily.

The protein localises to the cytoplasm. It carries out the reaction phosphoenolpyruvate + UDP-N-acetyl-alpha-D-glucosamine = UDP-N-acetyl-3-O-(1-carboxyvinyl)-alpha-D-glucosamine + phosphate. It functions in the pathway cell wall biogenesis; peptidoglycan biosynthesis. In terms of biological role, cell wall formation. Adds enolpyruvyl to UDP-N-acetylglucosamine. The chain is UDP-N-acetylglucosamine 1-carboxyvinyltransferase from Prochlorococcus marinus subsp. pastoris (strain CCMP1986 / NIES-2087 / MED4).